The primary structure comprises 189 residues: Chitin synthase 1 (189 aa).

It belongs to the chitin synthase family. Class I subfamily.

It localises to the cell membrane. It catalyses the reaction [(1-&gt;4)-N-acetyl-beta-D-glucosaminyl](n) + UDP-N-acetyl-alpha-D-glucosamine = [(1-&gt;4)-N-acetyl-beta-D-glucosaminyl](n+1) + UDP + H(+). Polymerizes chitin, a structural polymer of the cell wall and septum, by transferring the sugar moiety of UDP-GlcNAc to the non-reducing end of the growing chitin polymer. This Botryotinia fuckeliana (Noble rot fungus) protein is Chitin synthase 1 (chs1).